The following is a 253-amino-acid chain: Type III pantothenate kinase (253 aa).

An ATP-binding site is contributed by 6–13 (DVGNTNTV). A substrate-binding site is contributed by 103-106 (GADR). Aspartate 105 serves as the catalytic Proton acceptor. Aspartate 125 contributes to the K(+) binding site. Residue threonine 128 coordinates ATP. Threonine 180 lines the substrate pocket.

The protein belongs to the type III pantothenate kinase family. In terms of assembly, homodimer. NH4(+) is required as a cofactor. It depends on K(+) as a cofactor.

The protein resides in the cytoplasm. The catalysed reaction is (R)-pantothenate + ATP = (R)-4'-phosphopantothenate + ADP + H(+). Its pathway is cofactor biosynthesis; coenzyme A biosynthesis; CoA from (R)-pantothenate: step 1/5. Functionally, catalyzes the phosphorylation of pantothenate (Pan), the first step in CoA biosynthesis. The sequence is that of Type III pantothenate kinase from Parafrankia sp. (strain EAN1pec).